The sequence spans 200 residues: Glycerol-3-phosphate acyltransferase (200 aa).

The next 5 helical transmembrane spans lie at 6 to 26 (LTLG…AVLV), 56 to 76 (SAAM…YIAF), 82 to 102 (QVAL…PIFF), 118 to 138 (APIG…MVLI), and 141 to 161 (YSSL…WFLD).

It belongs to the PlsY family. In terms of assembly, probably interacts with PlsX.

It is found in the cell inner membrane. The enzyme catalyses an acyl phosphate + sn-glycerol 3-phosphate = a 1-acyl-sn-glycero-3-phosphate + phosphate. It functions in the pathway lipid metabolism; phospholipid metabolism. Functionally, catalyzes the transfer of an acyl group from acyl-phosphate (acyl-PO(4)) to glycerol-3-phosphate (G3P) to form lysophosphatidic acid (LPA). This enzyme utilizes acyl-phosphate as fatty acyl donor, but not acyl-CoA or acyl-ACP. The chain is Glycerol-3-phosphate acyltransferase from Shewanella sediminis (strain HAW-EB3).